We begin with the raw amino-acid sequence, 754 residues long: MNPSGSIGVLEQNGEEHLAAPILGPSVNSDNPQERIQARRLRIAARQEARRREALGEYLDGKKESEEEQSKSYKQKEESRLKLTKLLLCGTELVTNIQVAADIREIHRRVEEEETKRQRLEKLENEVKTSQDKFDEITSKWEEGRQKRIPQELWEMLNNQQVHCAGLVEDKNKLISELQQELKIKDDQYVKDLKKQSEDITVLLERMEEQVKSVMKNFRQELNYIEKAFESERQELLTTNKKKWERALQAHNAKELEYLINRMKRVEDYEKQLNRQRVWDCEEYNSIKIKLEQDVQILEQQLQQMKATYQLNQEKLEYNFQVLKKRDEESTVIKSQQKRKLNRLHDILNNLRTKYSKQIKQFQEDNQSLTSDYKRLVTQFKDLQKAIRHFIIIDQDKFREIWLMNEAEAKELAQRAFDVDKIIHSQHLGLPWKIPNFWFLNNVGPISLQQQQKSVTQILEELLLQSEDEGTETAMSEDESYMDLPNQVSAKTTKKILVLLCDESGFLIESKLLSLLLPLEKSECYLLRLDAIFSALGIESEDDLYKMVNFFLRFKAHHLSSAQVSISTHSNAERTSLVSALQHMSLMSQTDRRSSASKSDGDPTELEDQQGSDNGSLMGRELVEQEDLSSPMFIHPNDVLKILDAFVTGLKKPKDARPVQRLKKDTRNNLKDTEYWESLAMVIPFSKQNLWDALFKALEKYYLVLTQRAKLLMENDSLEQQNAEMQSLLQQYLQAKVNLELQVPPTQGFRMPSK.

Disordered regions lie at residues 1-32 and 55-76; these read MNPSGSIGVLEQNGEEHLAAPILGPSVNSDNP and LGEYLDGKKESEEEQSKSYKQK. Positions 98–388 form a coiled coil; sequence QVAADIREIH…QFKDLQKAIR (291 aa). Residues 587–616 are disordered; it reads MSQTDRRSSASKSDGDPTELEDQQGSDNGS. Residues 704 to 743 adopt a coiled-coil conformation; it reads VLTQRAKLLMENDSLEQQNAEMQSLLQQYLQAKVNLELQV.

The protein belongs to the DRC1 family. Component of the nexin-dynein regulatory complex (N-DRC). Interacts with CCDC65/DRC2, DRC3, GAS8/DRC4 and TCTE1/DRC5.

It localises to the cytoplasm. It is found in the cytoskeleton. The protein resides in the cilium axoneme. Its subcellular location is the flagellum axoneme. In terms of biological role, component of the nexin-dynein regulatory complex (N-DRC) a key regulator of ciliary/flagellar motility which maintains the alignment and integrity of the distal axoneme and regulates microtubule sliding in motile axonemes. Plays a critical role in the assembly of N-DRC and also stabilizes the assembly of multiple inner dynein arms and radial spokes. Coassembles with CCDC65/DRC2 to form a central scaffold needed for assembly of the N-DRC and its attachment to the outer doublet microtubules. The protein is Dynein regulatory complex protein 1 (Drc1) of Rattus norvegicus (Rat).